The sequence spans 200 residues: Inducible T-cell costimulator (200 aa).

The first 20 residues, 1-20 (MKPYFSCVFVFCFLIKLLTG), serve as a signal peptide directing secretion. Over 21–145 (ELNDLANHRM…LCCQLKLWLP (125 aa)) the chain is Extracellular. One can recognise an Ig-like V-type domain in the interval 30-133 (MFSFHDGGVQ…LSGGYLLIYE (104 aa)). Cystine bridges form between Cys42–Cys109 and Cys63–Cys83. Residues Asn89 and Asn123 are each glycosylated (N-linked (GlcNAc...) asparagine). The chain crosses the membrane as a helical span at residues 146–166 (VGCAAFVAALLFGCIFIVWFA). The Cytoplasmic portion of the chain corresponds to 167–200 (KKKYRSSVHDPNSEYMFMAAVNTNKKSRLAGMTS).

In terms of assembly, homodimer; disulfide-linked. Interacts with ICOSLG. Interacts with PIK3R1. Interacts with TBK1; this interaction is critical for the maturation of T follicular regulatory cells. N-glycosylated. In terms of tissue distribution, strongly expressed in the spleen and lung. Lower expression seen in liver, kidney and testis.

The protein localises to the cell membrane. Stimulatory receptor expressed in activated or antigen-experienced T-cells that plays an important role in the immune response. Upon binding to its ligand ICOSL expressed on antigen presenting cells (APCs), delivers costimulatory signals that enhances all basic T-cell responses to a foreign antigen, namely proliferation, secretion of lymphokines including IL10, up-regulation of molecules that mediate cell-cell interaction, and effective help for antibody secretion by B-cells. Also acts as a costimulatory receptor critical for the differentiation of T follicular regulatory cells upon immune challenges such as viral infection. Mechanistically, potentiates TCR-induced calcium flux by augmenting PLCG1 activation and actin remodeling. In addition, activates PI3K signaling pathways independently of calcium flux. Essential both for efficient interaction between T and B-cells and for normal antibody responses to T-cell dependent antigens. Prevents the apoptosis of pre-activated T-cells. Plays a critical role in CD40-mediated class switching of immunoglobin isotypes. The protein is Inducible T-cell costimulator (Icos) of Rattus norvegicus (Rat).